The primary structure comprises 110 residues: Inner membrane protein H108R (110 aa).

A helical membrane pass occupies residues 10–32 (LIVIITILITTRELSTTMLIVSL).

The protein belongs to the asfivirus H108R family.

The protein localises to the virion membrane. This African swine fever virus (isolate Pig/Kenya/KEN-50/1950) (ASFV) protein is Inner membrane protein H108R.